A 226-amino-acid chain; its full sequence is Protein AhpA (226 aa).

The next 2 membrane-spanning stretches (helical) occupy residues 12–32 (SMIS…LFGV) and 169–189 (GELI…HYFL).

Belongs to the Smp family.

The protein localises to the cell inner membrane. Its function is as follows. When anaerobically expressed in wild-type E.coli K12 confers a hemolytic phenotype, but not in an sheA mutant. Suggests it affects the expression of the latent E.coli K12 hemolysin sheA under anaerobic conditions. The protein is Protein AhpA (ahpA) of Pasteurella multocida (strain Pm70).